A 368-amino-acid chain; its full sequence is Protein mab-21-like (368 aa).

Belongs to the mab-21 family.

The sequence is that of Protein mab-21-like from Drosophila pseudoobscura pseudoobscura (Fruit fly).